Reading from the N-terminus, the 169-residue chain is Thaumatin-like pathogenesis-related protein 4 (169 aa).

The first 21 residues, 1–21 (MATSSTVLFLLLAVFAASASA), serve as a signal peptide directing secretion.

The protein belongs to the thaumatin family.

In terms of biological role, associated with resistance against stem rust fungi. In Avena sativa (Oat), this protein is Thaumatin-like pathogenesis-related protein 4 (RASTL-4).